Consider the following 263-residue polypeptide: Hydroxyethylthiazole kinase 1 (263 aa).

M42 lines the substrate pocket. ATP-binding residues include K118 and T164. Residue G191 coordinates substrate.

Belongs to the Thz kinase family. Mg(2+) is required as a cofactor.

The catalysed reaction is 5-(2-hydroxyethyl)-4-methylthiazole + ATP = 4-methyl-5-(2-phosphooxyethyl)-thiazole + ADP + H(+). Its pathway is cofactor biosynthesis; thiamine diphosphate biosynthesis; 4-methyl-5-(2-phosphoethyl)-thiazole from 5-(2-hydroxyethyl)-4-methylthiazole: step 1/1. In terms of biological role, catalyzes the phosphorylation of the hydroxyl group of 4-methyl-5-beta-hydroxyethylthiazole (THZ). This chain is Hydroxyethylthiazole kinase 1, found in Clostridium botulinum (strain ATCC 19397 / Type A).